The primary structure comprises 365 residues: 3-amino-4-hydroxybenzoate 4-O-methyltransferase (365 aa).

Positions 1–18 (MTVPENAQHTAPDQTQHT) are enriched in polar residues. Residues 1 to 32 (MTVPENAQHTAPDQTQHTAPDRTRQAQQAAPD) form a disordered region. S-adenosyl-L-methionine contacts are provided by residues D227, 253-255 (GDF), and R270. The Proton acceptor role is filled by H273.

Belongs to the class I-like SAM-binding methyltransferase superfamily. Cation-independent O-methyltransferase family.

The enzyme catalyses 3-amino-2,4-dihydroxybenzoate + S-adenosyl-L-methionine = 3-amino-2-hydroxy-4-methoxybenzoate + S-adenosyl-L-homocysteine + H(+). It participates in antibiotic biosynthesis. Functionally, part of a gene cluster involved in the biosynthesis of cremeomycin, a light-sensitive o-diazoquinone with antibacterial and antiproliferative effects. Catalyzes the methylation of the C4 hydroxyl group of 3-amino-2,4-dihydroxybenzoate (3,2,4-ADHBA) to form 3-amino-2-hydroxy-4-methoxybenzoate (3,2,4-AHMBA). In vitro, can also catalyze the methylation of 3-amino-4-hydroxybenzoate (3,4-AHBA). The protein is 3-amino-4-hydroxybenzoate 4-O-methyltransferase of Streptomyces cremeus.